The sequence spans 259 residues: Probable kinetochore protein spc25 (259 aa).

The span at 1–20 shows a compositional bias: polar residues; it reads MSRKSVMSSTFEPSLSTSRQ. Residues 1-25 form a disordered region; sequence MSRKSVMSSTFEPSLSTSRQPLGPS. A coiled-coil region spans residues 59-162; the sequence is RKRVLEERNQ…HAAQLEAQAR (104 aa).

Belongs to the SPC25 family. As to quaternary structure, component of the NDC80 complex, which consists of kpr-1/ndc80, kpr-2/nuf2, kpr-3/spc24 and kpr-4/spc25.

Its subcellular location is the nucleus. The protein resides in the chromosome. It localises to the centromere. It is found in the kinetochore. Its function is as follows. Acts as a component of the essential kinetochore-associated NDC80 complex, which is required for chromosome segregation and spindle checkpoint activity. In Neurospora crassa (strain ATCC 24698 / 74-OR23-1A / CBS 708.71 / DSM 1257 / FGSC 987), this protein is Probable kinetochore protein spc25 (kpr-4).